We begin with the raw amino-acid sequence, 299 residues long: Taste receptor type 2 member 16 (299 aa).

The Extracellular portion of the chain corresponds to 1–5; the sequence is MVPTQ. The chain crosses the membrane as a helical span at residues 6–26; the sequence is VTIFSIIMYVLESLVIIVQSC. Residues 27 to 47 lie on the Cytoplasmic side of the membrane; it reads TTVAVLFREWMHFQRLSPVET. Residues 48–68 form a helical membrane-spanning segment; it reads ILISLGISHFCLQWTSMLYNF. Residues 69–82 lie on the Extracellular side of the membrane; sequence GTYSRPVLLFWKVS. Residues 83-103 traverse the membrane as a helical segment; it reads VVWEFMNILTFWLTSWLAVLY. The Cytoplasmic segment spans residues 104–125; it reads CVKVSSFTHPIFLWLRMKILKL. The helical transmembrane segment at 126 to 146 threads the bilayer; that stretch reads VLWLILGALIASCLSIIPSVV. Residues 147-183 lie on the Extracellular side of the membrane; it reads KYHIQMELVTLDNLPKNNSLILRLQQFEWYFSNPLKM. N-linked (GlcNAc...) asparagine glycosylation is present at asparagine 163. The chain crosses the membrane as a helical span at residues 184–204; that stretch reads IGFGIPFFVFLASIILLTVSL. The Cytoplasmic portion of the chain corresponds to 205–233; sequence VQHWVQMKHYSSSNSSLKAQFTVLKSLAT. A helical transmembrane segment spans residues 234-254; sequence FFTFFTSYFLTIVISFIGTVF. Residues 255-258 are Extracellular-facing; that stretch reads DKKS. Residues 259–279 form a helical membrane-spanning segment; the sequence is WFWVCEAVIYGLVCIHFTSLM. The Cytoplasmic portion of the chain corresponds to 280–299; sequence MSNPALKKALKLQFWSPEPS.

This sequence belongs to the G-protein coupled receptor T2R family. Interacts with RTP3 and RTP4.

It localises to the cell membrane. Gustducin-coupled receptor implicated in the perception of bitter compounds in the oral cavity and the gastrointestinal tract. Signals through PLCB2 and the calcium-regulated cation channel TRPM5. This is Taste receptor type 2 member 16 (Tas2r16) from Mus musculus (Mouse).